A 389-amino-acid polypeptide reads, in one-letter code: Chalcone synthase 6 (389 aa).

The active site involves Cys-164.

It belongs to the thiolase-like superfamily. Chalcone/stilbene synthases family.

The catalysed reaction is (E)-4-coumaroyl-CoA + 3 malonyl-CoA + 3 H(+) = 2',4,4',6'-tetrahydroxychalcone + 3 CO2 + 4 CoA. It participates in secondary metabolite biosynthesis; flavonoid biosynthesis. In terms of biological role, the primary product of this enzyme is 4,2',4',6'-tetrahydroxychalcone (also termed naringenin-chalcone or chalcone) which can under specific conditions spontaneously isomerize into naringenin. This is Chalcone synthase 6 (CHS6) from Trifolium subterraneum (Subterranean clover).